Consider the following 826-residue polypeptide: Arsenite oxidase subunit AioA (826 aa).

[3Fe-4S] cluster is bound by residues Cys-22, Cys-25, and Cys-29. Residues His-196, Glu-204, Arg-420, and His-424 each coordinate substrate.

Belongs to the prokaryotic molybdopterin-containing oxidoreductase family. Heterodimer consisting of a large and a small subunit. [3Fe-4S] cluster serves as cofactor. Requires Mo-bis(molybdopterin guanine dinucleotide) as cofactor.

The catalysed reaction is 2 oxidized [azurin] + arsenite + H2O = 2 reduced [azurin] + arsenate + 3 H(+). Functionally, involved in the detoxification of arsenic. Oxidizes As(III)O3(3-) (arsenite) to the somewhat less toxic As(V)O4(3-) (arsenate). The chain is Arsenite oxidase subunit AioA (aioA) from Alcaligenes faecalis.